The sequence spans 784 residues: Phosphate transporter PHO1 homolog 1 (784 aa).

The Cytoplasmic portion of the chain corresponds to 1–387 (MVKFTKQFEG…HHRKESHSVT (387 aa)). The SPX domain occupies 2 to 335 (VKFTKQFEGQ…GKQILPIYLK (334 aa)). The helical transmembrane segment at 388–408 (FFIGLFTGCFVALLAGYIIVA) threads the bilayer. The Extracellular portion of the chain corresponds to 409–429 (HLTGMYRQHSANTFYMETAYP). The chain crosses the membrane as a helical span at residues 430-450 (VLSMFGLLFLHLFLYGCNIFM). The Cytoplasmic portion of the chain corresponds to 451–474 (WRKARINYSFIFELGSKNELKYRD). Residues 475-495 (VFLICTASMSAIAGVMFVHLS) traverse the membrane as a helical segment. At 496–507 (LLEKGYSFRQVQ) the chain is on the extracellular side. Residues 508-528 (VIPGLLLLGFLLILICPLNIF) traverse the membrane as a helical segment. The Cytoplasmic portion of the chain corresponds to 529–654 (YKSSRYRLIS…TKVAYEKERS (126 aa)). The 192-residue stretch at 593-784 (MRVKYYRDLA…LPFREVDEED (192 aa)) folds into the EXS domain. A helical transmembrane segment spans residues 655 to 675 (LGWLCLVVAMSSVATIYQLYW). Over 676–703 (DFVKDWGLLQHNSNNPWLRNQLMLRQKS) the chain is Extracellular. The helical transmembrane segment at 704–724 (IYYFSMVLNLVLRLAWLQTVL) threads the bilayer. The Cytoplasmic portion of the chain corresponds to 725–784 (HSSFEHVDYRVTGLFLAALEVIRRGQWNFYRLENEHLNNAGKFRAVKTVPLPFREVDEED).

The protein belongs to the SYG1 (TC 2.A.94) family. In terms of tissue distribution, expressed in vascular cylinder of roots, leaves, stems, petals, sepals and filaments. Expressed in receptacle, stigma apex and anther connective tissue.

The protein resides in the cell membrane. Contributes to the loading of inorganic phosphate (Pi) into the root xylem vessels. The sequence is that of Phosphate transporter PHO1 homolog 1 (PHO1-H1) from Arabidopsis thaliana (Mouse-ear cress).